Reading from the N-terminus, the 441-residue chain is Protein arginine methyltransferase NDUFAF7, mitochondrial (441 aa).

The N-terminal 46 residues, 1–46 (MNFLAAAGVRRLCAMRAVLPCLWRGKYFSSGNEPAENNTVTPMLRH), are a transit peptide targeting the mitochondrion. The segment at 415 to 434 (GRNHQTNARQSKPSPSPVAG) is disordered. The span at 418-427 (HQTNARQSKP) shows a compositional bias: polar residues.

Belongs to the NDUFAF7 family. In terms of assembly, interacts with NDUFS2.

Its subcellular location is the mitochondrion. The enzyme catalyses L-arginyl-[protein] + 2 S-adenosyl-L-methionine = N(omega),N(omega)'-dimethyl-L-arginyl-[protein] + 2 S-adenosyl-L-homocysteine + 2 H(+). In terms of biological role, arginine methyltransferase involved in the assembly or stability of mitochondrial NADH:ubiquinone oxidoreductase complex (complex I). Acts by mediating symmetric dimethylation of 'Arg-118' of NDUFS2 after it assembles into the complex I, stabilizing the early intermediate complex. This Bos taurus (Bovine) protein is Protein arginine methyltransferase NDUFAF7, mitochondrial.